An 807-amino-acid chain; its full sequence is Leucine--tRNA ligase (807 aa).

Residues 40–51 carry the 'HIGH' region motif; sequence PYPSGSGLHVGH. The short motif at 576–580 is the 'KMSKS' region element; sequence KMSKS. ATP is bound at residue K579.

The protein belongs to the class-I aminoacyl-tRNA synthetase family.

Its subcellular location is the cytoplasm. The enzyme catalyses tRNA(Leu) + L-leucine + ATP = L-leucyl-tRNA(Leu) + AMP + diphosphate. The polypeptide is Leucine--tRNA ligase (Chlorobaculum parvum (strain DSM 263 / NCIMB 8327) (Chlorobium vibrioforme subsp. thiosulfatophilum)).